The following is a 414-amino-acid chain: Lipoyl synthase, mitochondrial (414 aa).

Residues 1–31 (MAVSTSHFRSLCASRPLSRTAIVGHISCRSY) constitute a mitochondrion transit peptide. Positions 31–51 (YATTEPSPSATSTSTTTTARR) are disordered. A compositionally biased stretch (low complexity) spans 32–48 (ATTEPSPSATSTSTTTT). 7 residues coordinate [4Fe-4S] cluster: cysteine 131, cysteine 136, cysteine 142, cysteine 162, cysteine 166, cysteine 169, and serine 377. The Radical SAM core domain maps to 145-366 (GSDKSAATAT…RQRALDMGFL (222 aa)).

The protein belongs to the radical SAM superfamily. Lipoyl synthase family. [4Fe-4S] cluster is required as a cofactor.

The protein resides in the mitochondrion. It carries out the reaction [[Fe-S] cluster scaffold protein carrying a second [4Fe-4S](2+) cluster] + N(6)-octanoyl-L-lysyl-[protein] + 2 oxidized [2Fe-2S]-[ferredoxin] + 2 S-adenosyl-L-methionine + 4 H(+) = [[Fe-S] cluster scaffold protein] + N(6)-[(R)-dihydrolipoyl]-L-lysyl-[protein] + 4 Fe(3+) + 2 hydrogen sulfide + 2 5'-deoxyadenosine + 2 L-methionine + 2 reduced [2Fe-2S]-[ferredoxin]. It participates in protein modification; protein lipoylation via endogenous pathway; protein N(6)-(lipoyl)lysine from octanoyl-[acyl-carrier-protein]: step 2/2. Functionally, catalyzes the radical-mediated insertion of two sulfur atoms into the C-6 and C-8 positions of the octanoyl moiety bound to the lipoyl domains of lipoate-dependent enzymes, thereby converting the octanoylated domains into lipoylated derivatives. This chain is Lipoyl synthase, mitochondrial, found in Aspergillus fumigatus (strain CBS 144.89 / FGSC A1163 / CEA10) (Neosartorya fumigata).